A 611-amino-acid chain; its full sequence is POU domain, class 6, transcription factor 1 (611 aa).

Positions 62–93 (ASQAAGEAGPDNLGSSAEATVKSPPGIPPSPA) are disordered. The POU-specific domain occupies 449–523 (EDGINLEEIR…VLEKWLNEAE (75 aa)). Positions 544-603 (KRKRRTSFTPQAIEALNAYFEKNPLPTGQEITEIAKELNYDREVVRVWFCNRRQTLKNTS) form a DNA-binding region, homeobox.

This sequence belongs to the POU transcription factor family. Class-6 subfamily. In the embryo, expressed exclusively in the developing brain, whereas in the adult its expression is restricted to brain, heart, skeletal muscle and lung. In the brain, the highest expression levels are found in specific cell layers of the cortex, the olfactory bulb, the hippocampus and the cerebellum.

Its subcellular location is the nucleus. Functionally, transcription factor that binds preferentially to a variant of the octamer motif (5'-ATGATAAT-3'). In Homo sapiens (Human), this protein is POU domain, class 6, transcription factor 1 (POU6F1).